Here is a 475-residue protein sequence, read N- to C-terminus: Legumain (475 aa).

Residues 1 to 15 (MVMMLVMLSLHGTAA) form the signal peptide. The propeptide occupies 16 to 35 (RLNRREWDSVIQLPTEPVDD). His158 is an active-site residue. Cys200 serves as the catalytic Nucleophile. Cys233 and Cys247 are oxidised to a cystine. Asn300 is a glycosylation site (N-linked (GlcNAc...) asparagine). 2 cysteine pairs are disulfide-bonded: Cys411-Cys441 and Cys423-Cys458.

The protein belongs to the peptidase C13 family. As to quaternary structure, homodimer.

It carries out the reaction Hydrolysis of proteins and small molecule substrates at -Asn-|-Xaa- bonds.. Its activity is regulated as follows. Repressed by various protease inhibitors including p-chloromercuribenzene sulfonic acid (PCMBS), N-ethylmaleimide, kininogen, elastatinal, cystatin EW and leupeptin. Its function is as follows. Asparaginyl endopeptidase able to cleave almost all peptide bonds on the carboxyl side of Asn residues, except at the NH2 terminus or second position or with N-glycosylated Asn. Responsible for the maturation (circular permutation) of concanavalin A from its precursor, by performing both cleavage and cleavage-coupled transpeptidation to form conA. This Canavalia ensiformis (Jack bean) protein is Legumain.